The primary structure comprises 890 residues: Translation initiation factor IF-2 (890 aa).

The tract at residues leucine 45–glutamine 304 is disordered. A compositionally biased stretch (polar residues) spans serine 67–valine 81. A compositionally biased stretch (basic and acidic residues) spans valine 92–aspartate 217. Over residues glycine 252–asparagine 266 the composition is skewed to basic residues. Positions lysine 267–alanine 280 are enriched in basic and acidic residues. One can recognise a tr-type G domain in the interval proline 389–lysine 558. The G1 stretch occupies residues glycine 398–threonine 405. Glycine 398 to threonine 405 provides a ligand contact to GTP. A G2 region spans residues glycine 423 to histidine 427. Residues aspartate 444–glycine 447 are G3. Residues aspartate 444–histidine 448 and asparagine 498–aspartate 501 contribute to the GTP site. The interval asparagine 498–aspartate 501 is G4. Positions serine 534 to lysine 536 are G5. Residue lysine 808 is modified to N6-acetyllysine.

It belongs to the TRAFAC class translation factor GTPase superfamily. Classic translation factor GTPase family. IF-2 subfamily.

It localises to the cytoplasm. In terms of biological role, one of the essential components for the initiation of protein synthesis. Protects formylmethionyl-tRNA from spontaneous hydrolysis and promotes its binding to the 30S ribosomal subunits. Also involved in the hydrolysis of GTP during the formation of the 70S ribosomal complex. This chain is Translation initiation factor IF-2, found in Shigella sonnei (strain Ss046).